We begin with the raw amino-acid sequence, 614 residues long: MTTVVNLPRDPNTLSNYNNWVSTHITANFDILFDQRKLAGNVIHRFRSTTDGESNHIILDTNHLDIGSVKVNGQPSEWEYLPRLEPYGTPLKIKLDQGVKLNETIEVDISVQTTEKCTALQWLTPAQTSNKKHPYMFSQCQAIHARSIFPCQDTPDVKCTLDFNITSPLPVIASGLPVRGSSEAPKSDGKTLYKFHQKVPIPSYLFALASGDISEAPIGPRSVVATSPDKLGECQWELEADTEKFINAIEKIVYPYVWGEYNVLILPPSFPYGGMENPIFTFATPSIISKDRENIDVIAHELAHSWSGNLVTNASWEHFWLNEGWTTYLERRLRHGEPYRHFSAIIGWKALTDSVEHFGPEHDFTKLITNLKGMDPDDAFSSIPYEKGFNFLFHLENLVGKSKFDRFIPHYFNKYKGKSLDSYEFKSTILDFFKDDSDASTALNELDWDSWFYAPGLPPKPDFDTSLVDVVYDLAKKWLSLPKSSFKPQPEDIRGLTANQVVVFLEQILVSERQLTPELSKLMGEIYGLAASQNIEVANLYFQVGLQAGDASVVEPTADLLGKIGRMKFVRPLYRKLAKFDRKRALDTFEKHKGFYHPICRAMVEKDLFGKKDE.

A peptide-binding positions include 139–141 (QCQ) and 271–276 (PYGGME). His-300 contacts Zn(2+). Catalysis depends on Glu-301, which acts as the Proton acceptor. 2 residues coordinate Zn(2+): His-304 and Glu-323. Catalysis depends on Tyr-385, which acts as the Proton donor.

Belongs to the peptidase M1 family. Zn(2+) serves as cofactor.

It localises to the cytoplasm. The protein localises to the nucleus. The enzyme catalyses an epoxide + H2O = an ethanediol. Aminopeptidase that preferentially cleaves di- and tripeptides. Also has low epoxide hydrolase activity (in vitro). Can hydrolyze the epoxide leukotriene LTA(4) but it forms preferentially 5,6-dihydroxy-7,9,11,14-eicosatetraenoic acid rather than the cytokine leukotriene B(4) as the product compared to the homologous mammalian enzyme (in vitro). The sequence is that of Leucine aminopeptidase 2 from Aspergillus fumigatus (strain ATCC MYA-4609 / CBS 101355 / FGSC A1100 / Af293) (Neosartorya fumigata).